A 190-amino-acid chain; its full sequence is Protein A52 (190 aa).

Belongs to the orthopoxvirus A52R protein family. Interacts with host TRAF6 and IRAK2.

Its function is as follows. Bcl-2-like protein which targets host toll-like receptor signaling complexes to suppress innate immune response. Interacts with host TRAF6 to activate p38 and subsequently induce the expression of several cytokines such as IL-10. Also associates with host IRAK2 to inhibit NF-kappa-B signaling. This Vaccinia virus (strain Western Reserve) (VACV) protein is Protein A52.